We begin with the raw amino-acid sequence, 119 residues long: Large ribosomal subunit protein bL20 (119 aa).

This sequence belongs to the bacterial ribosomal protein bL20 family.

In terms of biological role, binds directly to 23S ribosomal RNA and is necessary for the in vitro assembly process of the 50S ribosomal subunit. It is not involved in the protein synthesizing functions of that subunit. In Clostridium botulinum (strain ATCC 19397 / Type A), this protein is Large ribosomal subunit protein bL20.